The sequence spans 403 residues: Serine/threonine transporter SstT (403 aa).

A run of 10 helical transmembrane segments spans residues Leu15 to Trp35, Phe49 to Ile69, Leu85 to Phe105, Ala142 to Leu162, Ile183 to Leu203, Leu218 to Phe238, Tyr246 to Ala268, Ile289 to Ile309, Leu317 to Ala337, and Pro362 to Thr382.

Belongs to the dicarboxylate/amino acid:cation symporter (DAACS) (TC 2.A.23) family.

It localises to the cell inner membrane. It catalyses the reaction L-serine(in) + Na(+)(in) = L-serine(out) + Na(+)(out). The enzyme catalyses L-threonine(in) + Na(+)(in) = L-threonine(out) + Na(+)(out). Functionally, involved in the import of serine and threonine into the cell, with the concomitant import of sodium (symport system). The sequence is that of Serine/threonine transporter SstT from Chromohalobacter salexigens (strain ATCC BAA-138 / DSM 3043 / CIP 106854 / NCIMB 13768 / 1H11).